The following is a 478-amino-acid chain: 3-isopropylmalate dehydratase large subunit (478 aa).

Residues C359, C417, and C420 each contribute to the [4Fe-4S] cluster site.

This sequence belongs to the aconitase/IPM isomerase family. LeuC type 1 subfamily. As to quaternary structure, heterodimer of LeuC and LeuD. Requires [4Fe-4S] cluster as cofactor.

It carries out the reaction (2R,3S)-3-isopropylmalate = (2S)-2-isopropylmalate. Its pathway is amino-acid biosynthesis; L-leucine biosynthesis; L-leucine from 3-methyl-2-oxobutanoate: step 2/4. Its function is as follows. Catalyzes the isomerization between 2-isopropylmalate and 3-isopropylmalate, via the formation of 2-isopropylmaleate. The polypeptide is 3-isopropylmalate dehydratase large subunit (Anaeromyxobacter sp. (strain Fw109-5)).